A 52-amino-acid chain; its full sequence is Photosystem II reaction center protein M (52 aa).

The chain crosses the membrane as a helical span at residues 6–26 (FGFAASLLFVGVPTIFLIGLF). The interval 31–52 (DGEKSSFYSDTSKGRLSPEPKK) is disordered. The segment covering 42-52 (SKGRLSPEPKK) has biased composition (basic and acidic residues).

Belongs to the PsbM family. In terms of assembly, PSII is composed of 1 copy each of membrane proteins PsbA, PsbB, PsbC, PsbD, PsbE, PsbF, PsbH, PsbI, PsbJ, PsbK, PsbL, PsbM, PsbT, PsbX, PsbY, Psb30/Ycf12, peripheral proteins PsbO, CyanoQ (PsbQ), PsbU, PsbV and a large number of cofactors. It forms dimeric complexes.

The protein resides in the cellular thylakoid membrane. One of the components of the core complex of photosystem II (PSII). PSII is a light-driven water:plastoquinone oxidoreductase that uses light energy to abstract electrons from H(2)O, generating O(2) and a proton gradient subsequently used for ATP formation. It consists of a core antenna complex that captures photons, and an electron transfer chain that converts photonic excitation into a charge separation. This subunit is found at the monomer-monomer interface. This chain is Photosystem II reaction center protein M, found in Prochlorococcus marinus (strain NATL1A).